A 519-amino-acid chain; its full sequence is 2-isopropylmalate synthase (519 aa).

The Pyruvate carboxyltransferase domain maps to 5 to 267 (VIIFDTTLRD…QTRINHKEIY (263 aa)). Mn(2+) contacts are provided by aspartate 14, histidine 202, histidine 204, and asparagine 238. Positions 392-519 (VMNYFNTQSG…RKHHTTQEAV (128 aa)) are regulatory domain.

Belongs to the alpha-IPM synthase/homocitrate synthase family. LeuA type 1 subfamily. In terms of assembly, homodimer. The cofactor is Mn(2+).

It localises to the cytoplasm. The catalysed reaction is 3-methyl-2-oxobutanoate + acetyl-CoA + H2O = (2S)-2-isopropylmalate + CoA + H(+). Its pathway is amino-acid biosynthesis; L-leucine biosynthesis; L-leucine from 3-methyl-2-oxobutanoate: step 1/4. Its function is as follows. Catalyzes the condensation of the acetyl group of acetyl-CoA with 3-methyl-2-oxobutanoate (2-ketoisovalerate) to form 3-carboxy-3-hydroxy-4-methylpentanoate (2-isopropylmalate). This chain is 2-isopropylmalate synthase, found in Proteus mirabilis (strain HI4320).